The following is a 98-amino-acid chain: Aspartyl/glutamyl-tRNA(Asn/Gln) amidotransferase subunit C (98 aa).

The protein belongs to the GatC family. In terms of assembly, heterotrimer of A, B and C subunits.

It carries out the reaction L-glutamyl-tRNA(Gln) + L-glutamine + ATP + H2O = L-glutaminyl-tRNA(Gln) + L-glutamate + ADP + phosphate + H(+). It catalyses the reaction L-aspartyl-tRNA(Asn) + L-glutamine + ATP + H2O = L-asparaginyl-tRNA(Asn) + L-glutamate + ADP + phosphate + 2 H(+). Functionally, allows the formation of correctly charged Asn-tRNA(Asn) or Gln-tRNA(Gln) through the transamidation of misacylated Asp-tRNA(Asn) or Glu-tRNA(Gln) in organisms which lack either or both of asparaginyl-tRNA or glutaminyl-tRNA synthetases. The reaction takes place in the presence of glutamine and ATP through an activated phospho-Asp-tRNA(Asn) or phospho-Glu-tRNA(Gln). The polypeptide is Aspartyl/glutamyl-tRNA(Asn/Gln) amidotransferase subunit C (Mycobacterium avium (strain 104)).